The following is an 85-amino-acid chain: Phosphocarrier protein HPr (85 aa).

The HPr domain maps to methionine 1–glutamate 85. Residue histidine 15 is the Pros-phosphohistidine intermediate of the active site.

This sequence belongs to the HPr family.

It is found in the cytoplasm. Its function is as follows. General (non sugar-specific) component of the phosphoenolpyruvate-dependent sugar phosphotransferase system (sugar PTS). This major carbohydrate active-transport system catalyzes the phosphorylation of incoming sugar substrates concomitantly with their translocation across the cell membrane. The phosphoryl group from phosphoenolpyruvate (PEP) is transferred to the phosphoryl carrier protein HPr by enzyme I. Phospho-HPr then transfers it to the PTS EIIA domain. In Haemophilus influenzae (strain ATCC 51907 / DSM 11121 / KW20 / Rd), this protein is Phosphocarrier protein HPr (ptsH).